The sequence spans 260 residues: Centromere protein K (260 aa).

A coiled-coil region spans residues 84–173 (EEELQKVKKE…KKLMNALGEF (90 aa)).

It belongs to the CENP-K/MCM22 family. In terms of assembly, component of the CENPA-HI complex, at least composed of CENPH, CENPI, CENPK, CENPL, CENPM, CENPO and CENPP.

Its subcellular location is the nucleus. The protein localises to the chromosome. It is found in the centromere. The protein resides in the kinetochore. Component of the CENPA-HI complex, a centromeric complex involved in assembly of kinetochore proteins, mitotic progression and chromosome segregation. The sequence is that of Centromere protein K (CENPK) from Gallus gallus (Chicken).